A 479-amino-acid chain; its full sequence is Glucan 1,3-beta-glucosidase 2 (479 aa).

The first 21 residues, 1 to 21 (MMLFLIHLMALCCMFVAEVAC), serve as a signal peptide directing secretion. Asparagine 25, asparagine 29, asparagine 63, asparagine 104, asparagine 187, and asparagine 193 each carry an N-linked (GlcNAc...) asparagine glycan. The Proton donor role is filled by glutamate 227. Asparagine 254, asparagine 285, and asparagine 288 each carry an N-linked (GlcNAc...) asparagine glycan. Histidine 306 acts as the Nucleophile in catalysis. Asparagine 318 and asparagine 451 each carry an N-linked (GlcNAc...) asparagine glycan. The GPI-anchor amidated serine moiety is linked to residue serine 456. Residues 457 to 479 (SASAIASNKMTLLLAFLLVILVI) constitute a propeptide, removed in mature form.

It belongs to the glycosyl hydrolase 5 (cellulase A) family. In terms of processing, predicted to be a substrate for cleavage by KEX2.

It is found in the cell membrane. The protein localises to the secreted. It carries out the reaction Successive hydrolysis of beta-D-glucose units from the non-reducing ends of (1-&gt;3)-beta-D-glucans, releasing alpha-glucose.. Beta-glucanases participate in the metabolism of beta-glucan, the main structural component of the cell wall. EXG2 is not heavily involved in the exoglucanase function of the adhesion process. This is Glucan 1,3-beta-glucosidase 2 (EXG2) from Candida albicans (strain SC5314 / ATCC MYA-2876) (Yeast).